The following is a 138-amino-acid chain: Phosphoribosyl-AMP cyclohydrolase (138 aa).

Asp84 is a Mg(2+) binding site. Cys85 contacts Zn(2+). Asp86 and Asp88 together coordinate Mg(2+). Positions 102 and 109 each coordinate Zn(2+).

It belongs to the PRA-CH family. Homodimer. Mg(2+) serves as cofactor. Zn(2+) is required as a cofactor.

The protein localises to the cytoplasm. The catalysed reaction is 1-(5-phospho-beta-D-ribosyl)-5'-AMP + H2O = 1-(5-phospho-beta-D-ribosyl)-5-[(5-phospho-beta-D-ribosylamino)methylideneamino]imidazole-4-carboxamide. It participates in amino-acid biosynthesis; L-histidine biosynthesis; L-histidine from 5-phospho-alpha-D-ribose 1-diphosphate: step 3/9. Catalyzes the hydrolysis of the adenine ring of phosphoribosyl-AMP. The chain is Phosphoribosyl-AMP cyclohydrolase from Burkholderia pseudomallei (strain K96243).